Consider the following 183-residue polypeptide: Apo-citrate lyase phosphoribosyl-dephospho-CoA transferase (183 aa).

The protein belongs to the CitX family.

The catalysed reaction is apo-[citrate lyase ACP] + 2'-(5''-triphospho-alpha-D-ribosyl)-3'-dephospho-CoA = holo-[citrate lyase ACP] + diphosphate. Transfers 2-(5''-triphosphoribosyl)-3'-dephosphocoenzyme-A on a serine residue to the apo-acyl carrier protein (gamma chain) of the citrate lyase to yield holo-acyl carrier protein. This Escherichia coli O139:H28 (strain E24377A / ETEC) protein is Apo-citrate lyase phosphoribosyl-dephospho-CoA transferase.